The chain runs to 855 residues: Receptor-like protein kinase THESEUS 1 (855 aa).

An N-terminal signal peptide occupies residues 1-22 (MVFTKSLLVLLWFLSCYTTTTS). Residues 23 to 415 (SALFNPPDNY…GGSGSKSKKK (393 aa)) are Extracellular-facing. 14 N-linked (GlcNAc...) asparagine glycosylation sites follow: Asn41, Asn64, Asn75, Asn114, Asn118, Asn136, Asn143, Asn154, Asn168, Asn225, Asn242, Asn288, Asn353, and Asn376. The chain crosses the membrane as a helical span at residues 416–436 (AVIIGSLVGAVTLILLIAVCC). Residues 437–855 (YCCLVASRKQ…FSQLVHPRGR (419 aa)) are Cytoplasmic-facing. Residues 510–783 (FDESSLLGVG…GDVLWNLEYA (274 aa)) form the Protein kinase domain. Residues 516 to 524 (LGVGGFGRV) and Lys538 contribute to the ATP site. The active-site Proton acceptor is the Asp634. Residues 822 to 855 (IDRGGVNSGTGTDDDAEDATTSAVFSQLVHPRGR) form a disordered region.

Belongs to the protein kinase superfamily. Ser/Thr protein kinase family. In terms of processing, autophosphorylated. In terms of tissue distribution, expressed in most vegetative tissues, including leaves, stems and roots, primarily in expanding cells and vascular tissue.

It localises to the cell membrane. Functionally, receptor-like protein kinase required for cell elongation during vegetative growth, mostly in a brassinosteroid-(BR-) independent manner. Mediates the response of growing plant cells to the perturbation of cellulose synthesis and may act as a cell-wall-integrity sensor. Controls ectopic-lignin accumulation in cellulose-deficient mutant backgrounds. In Arabidopsis thaliana (Mouse-ear cress), this protein is Receptor-like protein kinase THESEUS 1 (THE1).